A 289-amino-acid polypeptide reads, in one-letter code: MAAAILDGRALAAQRRQQLREQVEAIAPAVGRRPGLAVIMVGDNPASAVYVRNKERACEQTGIVSFGKHLPGDSSEAEIRALIEELNQDDRVDGILVQLPLPSHLDAVPLLLAIDPEKDADGLHPLNLGRLLRGEEGLRSCTPAGVMELLAANQIDPAGKKAVVIGRSILVGKPLAMMLLEANATVTIAHSRTPNLPEVCRQADIVVAAVGRPELVGADWIKPGAVVVDVGINRLEDGRLVGDVDYEAASAITSWITPVPGGVGPMTVAMLLHNTVLSYCRRSGQPFLS.

NADP(+) contacts are provided by residues 166 to 168, Ser191, and Ile232; that span reads GRS.

Belongs to the tetrahydrofolate dehydrogenase/cyclohydrolase family. As to quaternary structure, homodimer.

It carries out the reaction (6R)-5,10-methylene-5,6,7,8-tetrahydrofolate + NADP(+) = (6R)-5,10-methenyltetrahydrofolate + NADPH. The catalysed reaction is (6R)-5,10-methenyltetrahydrofolate + H2O = (6R)-10-formyltetrahydrofolate + H(+). The protein operates within one-carbon metabolism; tetrahydrofolate interconversion. Functionally, catalyzes the oxidation of 5,10-methylenetetrahydrofolate to 5,10-methenyltetrahydrofolate and then the hydrolysis of 5,10-methenyltetrahydrofolate to 10-formyltetrahydrofolate. In Synechococcus elongatus (strain ATCC 33912 / PCC 7942 / FACHB-805) (Anacystis nidulans R2), this protein is Bifunctional protein FolD.